A 501-amino-acid polypeptide reads, in one-letter code: Aldehyde dehydrogenase, cytosolic 1 (501 aa).

S2 is modified (N-acetylserine). N6-acetyllysine is present on residues K91 and K128. 246-251 contributes to the NAD(+) binding site; that stretch reads GSTEVG. Position 252 is an N6-acetyllysine (K252). The active-site Proton acceptor is the E269. The Nucleophile role is filled by C303. 3 positions are modified to N6-acetyllysine: K353, K367, and K410. S413 is modified (phosphoserine). N6-acetyllysine is present on residues K419, K435, and K495.

It belongs to the aldehyde dehydrogenase family. In terms of assembly, homotetramer. As to expression, very low levels in lung and liver.

Its subcellular location is the cytoplasm. It carries out the reaction an aldehyde + NAD(+) + H2O = a carboxylate + NADH + 2 H(+). The protein operates within alcohol metabolism; ethanol degradation; acetate from ethanol: step 2/2. Functionally, can oxidize benzaldehyde, propionaldehyde and acetaldehyde. No detectable activity with retinal. This is Aldehyde dehydrogenase, cytosolic 1 (Aldh1a7) from Rattus norvegicus (Rat).